Reading from the N-terminus, the 167-residue chain is Lipoprotein signal peptidase (167 aa).

The next 3 membrane-spanning stretches (helical) occupy residues 10-30, 68-88, and 98-118; these read LIWL…KAWV, WQLW…AFWL, and SAVP…DRLM. Active-site residues include aspartate 124 and aspartate 142. The chain crosses the membrane as a helical span at residues 138-158; it reads FNIADSAIVGGAIGIALFGLF.

Belongs to the peptidase A8 family.

The protein localises to the cell inner membrane. It carries out the reaction Release of signal peptides from bacterial membrane prolipoproteins. Hydrolyzes -Xaa-Yaa-Zaa-|-(S,diacylglyceryl)Cys-, in which Xaa is hydrophobic (preferably Leu), and Yaa (Ala or Ser) and Zaa (Gly or Ala) have small, neutral side chains.. It functions in the pathway protein modification; lipoprotein biosynthesis (signal peptide cleavage). This protein specifically catalyzes the removal of signal peptides from prolipoproteins. The sequence is that of Lipoprotein signal peptidase from Xanthomonas campestris pv. campestris (strain 8004).